We begin with the raw amino-acid sequence, 218 residues long: Adenylate kinase (218 aa).

12-17 (GAGKGT) is an ATP binding site. Residues 32 to 61 (STGDIFRKNISENTPLGIEAKSYMDNGQLV) form an NMP region. AMP contacts are provided by residues threonine 33, arginine 38, 59–61 (QLV), 87–90 (GFPR), and glutamine 94. An LID region spans residues 128-165 (GRRVCPSCGASYHIKFNPPTNDGKCDLCGSDVIQRKDD). Arginine 129 serves as a coordination point for ATP. Cysteine 132 and cysteine 135 together coordinate Zn(2+). 138–139 (SY) contacts ATP. Zn(2+) contacts are provided by cysteine 152 and cysteine 155. The AMP site is built by arginine 162 and arginine 173. Position 201 (glutamine 201) interacts with ATP.

It belongs to the adenylate kinase family. In terms of assembly, monomer.

The protein resides in the cytoplasm. It carries out the reaction AMP + ATP = 2 ADP. Its pathway is purine metabolism; AMP biosynthesis via salvage pathway; AMP from ADP: step 1/1. Functionally, catalyzes the reversible transfer of the terminal phosphate group between ATP and AMP. Plays an important role in cellular energy homeostasis and in adenine nucleotide metabolism. The polypeptide is Adenylate kinase (Clostridium perfringens (strain 13 / Type A)).